Consider the following 150-residue polypeptide: MRAVVQRVSKSYVNVNGEKVGEINQGLNVLLGVEDGDGEDDIKYLVDKIVNLRIFEDDQGKMNLSVNDIGGELLVISQFTLLGDCRKGRRPNFMKAASPEIADELYQKFVEKVSKDYGLSLATGSFKEHMEVDILNDGPVTILLDSNKKF.

Positions 138–139 match the Gly-cisPro motif, important for rejection of L-amino acids motif; it reads GP.

It belongs to the DTD family. As to quaternary structure, homodimer.

The protein localises to the cytoplasm. It carries out the reaction glycyl-tRNA(Ala) + H2O = tRNA(Ala) + glycine + H(+). It catalyses the reaction a D-aminoacyl-tRNA + H2O = a tRNA + a D-alpha-amino acid + H(+). Functionally, an aminoacyl-tRNA editing enzyme that deacylates mischarged D-aminoacyl-tRNAs. Also deacylates mischarged glycyl-tRNA(Ala), protecting cells against glycine mischarging by AlaRS. Acts via tRNA-based rather than protein-based catalysis; rejects L-amino acids rather than detecting D-amino acids in the active site. By recycling D-aminoacyl-tRNA to D-amino acids and free tRNA molecules, this enzyme counteracts the toxicity associated with the formation of D-aminoacyl-tRNA entities in vivo and helps enforce protein L-homochirality. The sequence is that of D-aminoacyl-tRNA deacylase from Natranaerobius thermophilus (strain ATCC BAA-1301 / DSM 18059 / JW/NM-WN-LF).